We begin with the raw amino-acid sequence, 338 residues long: Ribosomal RNA small subunit methyltransferase C (338 aa).

The protein belongs to the methyltransferase superfamily. RsmC family. As to quaternary structure, monomer.

Its subcellular location is the cytoplasm. The enzyme catalyses guanosine(1207) in 16S rRNA + S-adenosyl-L-methionine = N(2)-methylguanosine(1207) in 16S rRNA + S-adenosyl-L-homocysteine + H(+). Its function is as follows. Specifically methylates the guanine in position 1207 of 16S rRNA in the 30S particle. This is Ribosomal RNA small subunit methyltransferase C from Acinetobacter baylyi (strain ATCC 33305 / BD413 / ADP1).